Reading from the N-terminus, the 1025-residue chain is Multidrug resistance protein MdtC (1025 aa).

Transmembrane regions (helical) follow at residues 3–23 (FFALFIYRPVATILLSVAITL), 333–353 (EVEQTLIISVALVILVVFLFL), 360–380 (IIPAVSVPVSLIGTFAAMYLC), 387–407 (LSLMALTIATGFVVDDAIVVL), 431–451 (VGFTVLSMSLSLVAVFLPLLL), 463–483 (FAVTLSVAIGISLLVSLTLTP), 528–548 (LVGVVLLGTIALNIWLYISIP), 853–873 (VILIIAAIATVYIVLGILYES), 875–895 (VHPLTILSTLPSAGVGALLAL), 897–917 (LFNAPFSLIALIGIMLLIGIV), 953–973 (PIMMTTLAALFGALPLVLSGG), and 984–1004 (ITIVGGLVMSQLLTLYTTPVV).

It belongs to the resistance-nodulation-cell division (RND) (TC 2.A.6) family. MdtC subfamily. As to quaternary structure, part of a tripartite efflux system composed of MdtA, MdtB and MdtC. MdtC forms a heteromultimer with MdtB.

Its subcellular location is the cell inner membrane. The MdtABC tripartite complex confers resistance against novobiocin and deoxycholate. This chain is Multidrug resistance protein MdtC, found in Escherichia coli (strain ATCC 8739 / DSM 1576 / NBRC 3972 / NCIMB 8545 / WDCM 00012 / Crooks).